Consider the following 45-residue polypeptide: Large ribosomal subunit protein bL34 (45 aa).

This sequence belongs to the bacterial ribosomal protein bL34 family.

The chain is Large ribosomal subunit protein bL34 from Prochlorococcus marinus (strain MIT 9313).